The sequence spans 272 residues: Putative hydro-lyase AZC_4080 (272 aa).

It belongs to the D-glutamate cyclase family.

This Azorhizobium caulinodans (strain ATCC 43989 / DSM 5975 / JCM 20966 / LMG 6465 / NBRC 14845 / NCIMB 13405 / ORS 571) protein is Putative hydro-lyase AZC_4080.